We begin with the raw amino-acid sequence, 328 residues long: Gonadotropin-releasing hormone receptor (328 aa).

The Extracellular portion of the chain corresponds to 1–38; sequence MANSASPEQNQNHCSASNSSIPLTQANLPTLTLSGKIR. The N-linked (GlcNAc...) asparagine glycan is linked to N18. A helical transmembrane segment spans residues 39–59; it reads VTVTFFLFLLSTTFNASFLLK. At 60–84 the chain is on the cytoplasmic side; that stretch reads LHKWTQKKENGKKLSKMKVLLKHLT. Residues 85-105 traverse the membrane as a helical segment; the sequence is LANLLETLIVMPLDGMWNITV. Residues 106 to 115 are Extracellular-facing; the sequence is QWYAGELLCK. C114 and C196 are joined by a disulfide. The chain crosses the membrane as a helical span at residues 116-136; sequence VLSYLKLFSMYAPAFMMVVIS. Residues 137–157 lie on the Cytoplasmic side of the membrane; sequence LDRSLAITRPLAVKSNSKLGR. A helical transmembrane segment spans residues 158–178; the sequence is SMIGLAWLLSSIFAGPQLYIF. At 179–208 the chain is on the extracellular side; the sequence is RMIHLADSSGQTEGFSQCVTHCSFPQWWHQ. A helical transmembrane segment spans residues 209 to 229; the sequence is AFYNFFTFSCLFIIPLLFMLI. Topologically, residues 230–271 are cytoplasmic; sequence CNAKIIFTLTRVLHQDPHKLQLNQSKNNIPRARLRTLKMTVA. The helical transmembrane segment at 272-292 threads the bilayer; sequence FATSFTVCWTPYYVLGIWYWF. The Extracellular segment spans residues 293 to 306; it reads DPEMLNRVSDPVNH. A helical transmembrane segment spans residues 307 to 327; sequence FFFLFALLNPCFDPLIYGYFS. Residue L328 is a topological domain, cytoplasmic.

This sequence belongs to the G-protein coupled receptor 1 family.

The protein localises to the cell membrane. In terms of biological role, receptor for gonadotropin releasing hormone (GnRH) that mediates the action of GnRH to stimulate the secretion of the gonadotropic hormones luteinizing hormone (LH) and follicle-stimulating hormone (FSH). This receptor mediates its action by association with G-proteins that activate a phosphatidylinositol-calcium second messenger system. The protein is Gonadotropin-releasing hormone receptor (GNRHR) of Equus caballus (Horse).